Consider the following 258-residue polypeptide: Methanol--corrinoid protein (258 aa).

Positions 30-124 constitute a B12-binding N-terminal domain; sequence AEELYPKDEL…NSGATPKTKG (95 aa). The B12-binding domain maps to 123-248; sequence KGTVVCHVAE…DAIIAGTTDV (126 aa). Histidine 136 contacts methylcob(III)alamin.

This sequence belongs to the methylamine corrinoid protein family. In terms of assembly, heterotetramer, composed of 2 MtaB and 2 MtaC subunits.

Harbors a corrinoid prosthetic group and acts as a methyl group carrier in methanogenesis in the methanol pathway. The methyl group of methanol is first transferred to the corrinoid prosthetic group of MtaC in the cob(I)amide oxidation state. This reaction is mediated by MtaB. The methyl group from MtaC is then transferred to coenzyme M by MtaA. This chain is Methanol--corrinoid protein (mtaC), found in Methanosarcina barkeri (strain Fusaro / DSM 804).